Consider the following 118-residue polypeptide: Small ribosomal subunit protein mS37 (118 aa).

Residues 42–84 (EATCITEMSVMMACWKQNEFRDDACRKEIQGFLDCAARAQEAR) enclose the CHCH domain. 2 short sequence motifs (cx9C motif) span residues 45–55 (CITEMSVMMAC) and 66–76 (CRKEIQGFLDC). 2 cysteine pairs are disulfide-bonded: cysteine 45/cysteine 76 and cysteine 55/cysteine 66.

This sequence belongs to the mitochondrion-specific ribosomal protein mS37 family. Component of the mitochondrial small ribosomal subunit (mt-SSU). Mature mammalian 55S mitochondrial ribosomes consist of a small (28S) and a large (39S) subunit. The 28S small subunit contains a 12S ribosomal RNA (12S mt-rRNA) and 30 different proteins. The 39S large subunit contains a 16S rRNA (16S mt-rRNA), a copy of mitochondrial valine transfer RNA (mt-tRNA(Val)), which plays an integral structural role, and 52 different proteins.

The protein resides in the mitochondrion. Its subcellular location is the nucleus. The chain is Small ribosomal subunit protein mS37 (CHCHD1) from Homo sapiens (Human).